The following is a 247-amino-acid chain: Ribosomal RNA small subunit methyltransferase G (247 aa).

Residues Gly-84, Phe-89, 136–137 (AE), and Arg-155 each bind S-adenosyl-L-methionine.

It belongs to the methyltransferase superfamily. RNA methyltransferase RsmG family.

Its subcellular location is the cytoplasm. Its function is as follows. Specifically methylates the N7 position of a guanine in 16S rRNA. This chain is Ribosomal RNA small subunit methyltransferase G, found in Prochlorococcus marinus (strain MIT 9313).